A 304-amino-acid polypeptide reads, in one-letter code: Nod factor export ATP-binding protein I (304 aa).

In terms of domain architecture, ABC transporter spans 6 to 236 (IDLAGVKKSF…HIGCQVIEIF (231 aa)). An ATP-binding site is contributed by 38–45 (GPNGAGKS).

Belongs to the ABC transporter superfamily. Lipooligosaccharide exporter (TC 3.A.1.102) family. In terms of assembly, the complex is composed of two ATP-binding proteins (NodI) and two transmembrane proteins (NodJ).

The protein resides in the cell inner membrane. Part of the ABC transporter complex NodIJ involved in the export of the nodulation factors (Nod factors), the bacterial signal molecules that induce symbiosis and subsequent nodulation induction. Nod factors are LCO (lipo-chitin oligosaccharide), a modified beta-1,4-linked N-acetylglucosamine oligosaccharide. This subunit is responsible for energy coupling to the transport system. In Rhizobium sp. (strain N33), this protein is Nod factor export ATP-binding protein I.